A 378-amino-acid chain; its full sequence is Carbamoyl phosphate synthase small chain (378 aa).

A CPSase region spans residues 1–189; it reads MTKPAILALA…DSHPEIPAGE (189 aa). Residues S47, G241, and G243 each coordinate L-glutamine. Positions 193–378 constitute a Glutamine amidotransferase type-1 domain; sequence HVVAYDYGVK…RFISAMAERR (186 aa). C269 serves as the catalytic Nucleophile. The L-glutamine site is built by L270, Q273, N311, G313, and F314. Catalysis depends on residues H353 and E355.

It belongs to the CarA family. Composed of two chains; the small (or glutamine) chain promotes the hydrolysis of glutamine to ammonia, which is used by the large (or ammonia) chain to synthesize carbamoyl phosphate. Tetramer of heterodimers (alpha,beta)4.

It catalyses the reaction hydrogencarbonate + L-glutamine + 2 ATP + H2O = carbamoyl phosphate + L-glutamate + 2 ADP + phosphate + 2 H(+). The catalysed reaction is L-glutamine + H2O = L-glutamate + NH4(+). It participates in amino-acid biosynthesis; L-arginine biosynthesis; carbamoyl phosphate from bicarbonate: step 1/1. Its pathway is pyrimidine metabolism; UMP biosynthesis via de novo pathway; (S)-dihydroorotate from bicarbonate: step 1/3. Its function is as follows. Small subunit of the glutamine-dependent carbamoyl phosphate synthetase (CPSase). CPSase catalyzes the formation of carbamoyl phosphate from the ammonia moiety of glutamine, carbonate, and phosphate donated by ATP, constituting the first step of 2 biosynthetic pathways, one leading to arginine and/or urea and the other to pyrimidine nucleotides. The small subunit (glutamine amidotransferase) binds and cleaves glutamine to supply the large subunit with the substrate ammonia. The polypeptide is Carbamoyl phosphate synthase small chain (Pseudomonas aeruginosa (strain ATCC 15692 / DSM 22644 / CIP 104116 / JCM 14847 / LMG 12228 / 1C / PRS 101 / PAO1)).